Here is a 220-residue protein sequence, read N- to C-terminus: Cell division protein DedD (220 aa).

A helical transmembrane segment spans residues Leu9–Gly29. 2 disordered regions span residues Lys46 to Ser84 and Phe97 to Ala137. Positions Pro57 to Gly70 are enriched in low complexity. A compositionally biased stretch (pro residues) spans Glu100–Pro109. Basic and acidic residues-rich tracts occupy residues Lys110–Val119 and Pro127–Ala137. Positions Ala138–Tyr217 constitute an SPOR domain.

This sequence belongs to the DedD family.

Its subcellular location is the cell inner membrane. In terms of biological role, non-essential cell division protein that could be required for efficient cell constriction. The sequence is that of Cell division protein DedD from Escherichia coli (strain K12).